An 89-amino-acid polypeptide reads, in one-letter code: Small ribosomal subunit protein uS15 (89 aa).

Belongs to the universal ribosomal protein uS15 family. Part of the 30S ribosomal subunit. Forms a bridge to the 50S subunit in the 70S ribosome, contacting the 23S rRNA.

One of the primary rRNA binding proteins, it binds directly to 16S rRNA where it helps nucleate assembly of the platform of the 30S subunit by binding and bridging several RNA helices of the 16S rRNA. In terms of biological role, forms an intersubunit bridge (bridge B4) with the 23S rRNA of the 50S subunit in the ribosome. The polypeptide is Small ribosomal subunit protein uS15 (Corynebacterium glutamicum (strain R)).